Consider the following 58-residue polypeptide: Small ribosomal subunit protein bS21 (58 aa).

Positions 32 to 42 (ARRREHYEKPS) are enriched in basic and acidic residues. Positions 32–58 (ARRREHYEKPSVRRKKKSEAARKRRWH) are disordered. The segment covering 43–58 (VRRKKKSEAARKRRWH) has biased composition (basic residues).

Belongs to the bacterial ribosomal protein bS21 family.

This Moorella thermoacetica (strain ATCC 39073 / JCM 9320) protein is Small ribosomal subunit protein bS21.